A 364-amino-acid polypeptide reads, in one-letter code: Trans-enoyl reductase sthE (364 aa).

An NADP(+)-binding site is contributed by 51–54 (TDYK). 137–144 (WGTAALAI) is a substrate binding site. Residues 172–175 (ATAT), 195–198 (SESS), Tyr213, and 261–262 (LE) each bind NADP(+). 281–285 (GFEGQ) is a binding site for substrate. 351–352 (VK) is a binding site for NADP(+).

This sequence belongs to the zinc-containing alcohol dehydrogenase family. In terms of assembly, monomer.

It catalyses the reaction 7 malonyl-CoA + acetyl-CoA + 10 AH2 + 5 S-adenosyl-L-methionine + 2 H(+) = dehydroprobetaenone I + 10 A + 5 S-adenosyl-L-homocysteine + 7 CO2 + 8 CoA + 6 H2O. The protein operates within mycotoxin biosynthesis. Its function is as follows. Trans-enoyl reductase; part of the gene cluster that mediates the biosynthesis of the phytotoxin stemphyloxin II. The first step of the pathway is the synthesis of dehydroprobetaenone I by the polyketide synthase sthA and the enoyl reductase sthE via condensation of one acetyl-CoA starter unit with 7 malonyl-CoA units and 5 methylations. The C-terminal reductase (R) domain of sthA catalyzes the reductive release of the polyketide chain. Because sthA lacks a designated enoylreductase (ER) domain, the required activity is provided the enoyl reductase sthE. The short-chain dehydrogenase/reductase sthC then catalyzes reduction of dehydroprobetaenone I to probetaenone I. The cytochrome P450 monooxygenase sthF catalyzes successive epoxidation, oxidation (resulting from epoxide opening) and hydroxylation to install a tertiary alcohol in the decaline ring to yield betaenone C from dehydroprobetaenone I and betaenone B from probetaenone I. The FAD-linked oxidoreductase sthB is responsible for the conversion of betaenone C to betaenone A via an intramolecular aldol reaction between C-1 and C-17 to form the bridged tricyclic system in betaenone A. Finally, the cytochrome P450 monooxygenase sthD catalyzes the hydroxylation of C-15 to afford the final metabolite stemphyloxin II. This is Trans-enoyl reductase sthE from Phaeosphaeria nodorum (strain SN15 / ATCC MYA-4574 / FGSC 10173) (Glume blotch fungus).